Reading from the N-terminus, the 72-residue chain is Cell division protein ZapB (72 aa).

A coiled-coil region spans residues 1–72 (MSLEILDQLE…RSLLGKIDNV (72 aa)). A disordered region spans residues 33 to 57 (KNNQSQQANDALRSENEQLKSEHQN). Over residues 44–57 (LRSENEQLKSEHQN) the composition is skewed to basic and acidic residues.

It belongs to the ZapB family. As to quaternary structure, homodimer. The ends of the coiled-coil dimer bind to each other, forming polymers. Interacts with FtsZ.

It localises to the cytoplasm. Functionally, non-essential, abundant cell division factor that is required for proper Z-ring formation. It is recruited early to the divisome by direct interaction with FtsZ, stimulating Z-ring assembly and thereby promoting cell division earlier in the cell cycle. Its recruitment to the Z-ring requires functional FtsA or ZipA. This is Cell division protein ZapB from Pasteurella multocida (strain Pm70).